The chain runs to 77 residues: Chassatide C13 (77 aa).

The first 24 residues, 1–24 (MAKFATQLLLFVLIASLVMLEVHA), serve as a signal peptide directing secretion. A propeptide spans 25-44 (SNTFQVPDLGKRLLMNRDPN) (removed in mature form). The segment at residues 45–75 (GFPCAESCVYIPCTVTALLGCSCRNRVCYRN) is a cross-link (cyclopeptide (Gly-Asn)). Cystine bridges form between cysteine 48/cysteine 65, cysteine 52/cysteine 67, and cysteine 57/cysteine 72. A propeptide spans 76 to 77 (EL) (removed in mature form).

This is a cyclic peptide. In terms of tissue distribution, expressed in fruit and pedicel but not in root, leaf and stem (at protein level).

Its function is as follows. Probably participates in a plant defense mechanism. This chain is Chassatide C13, found in Chassalia chartacea (Chassalia curviflora).